The chain runs to 191 residues: 2-amino-4-hydroxy-6-hydroxymethyldihydropteridine pyrophosphokinase (191 aa).

Belongs to the HPPK family.

The catalysed reaction is 6-hydroxymethyl-7,8-dihydropterin + ATP = (7,8-dihydropterin-6-yl)methyl diphosphate + AMP + H(+). Its pathway is cofactor biosynthesis; tetrahydrofolate biosynthesis; 2-amino-4-hydroxy-6-hydroxymethyl-7,8-dihydropteridine diphosphate from 7,8-dihydroneopterin triphosphate: step 4/4. Functionally, catalyzes the transfer of pyrophosphate from adenosine triphosphate (ATP) to 6-hydroxymethyl-7,8-dihydropterin, an enzymatic step in folate biosynthesis pathway. The protein is 2-amino-4-hydroxy-6-hydroxymethyldihydropteridine pyrophosphokinase (folK) of Mycobacterium leprae (strain TN).